A 648-amino-acid chain; its full sequence is Bifunctional lysine-specific demethylase and histidyl-hydroxylase NO66 (648 aa).

Residues 1–168 are disordered; sequence MSKVSSIFDT…KGAKAAKKNK (168 aa). Over residues 17 to 28 the composition is skewed to low complexity; that stretch reads PATTENGAAAKP. Residues 109-119 are compositionally biased toward basic residues; it reads DHRKHKEKLRK. The span at 123–137 shows a compositional bias: polar residues; it reads GVENSRQAAASTSML. Residues 155–168 are compositionally biased toward basic residues; the sequence is PVHHKGAKAAKKNK. Residues 308 to 453 form the JmjC domain; sequence CSIRMLNPQT…DLLELYLPHA (146 aa). Fe cation is bound by residues His-354, Asp-356, and His-419.

The protein belongs to the ROX family. NO66 subfamily. The cofactor is Fe(2+).

Its subcellular location is the nucleus. It carries out the reaction N(6),N(6)-dimethyl-L-lysyl(36)-[histone H3] + 2 2-oxoglutarate + 2 O2 = L-lysyl(36)-[histone H3] + 2 formaldehyde + 2 succinate + 2 CO2. Oxygenase that can act as both a histone lysine demethylase and a ribosomal histidine hydroxylase. Specifically demethylates 'Lys-4' (H3K4me) and 'Lys-36' (H3K36me) of histone H3, thereby playing a central role in histone code. This Culex quinquefasciatus (Southern house mosquito) protein is Bifunctional lysine-specific demethylase and histidyl-hydroxylase NO66.